The primary structure comprises 442 residues: ATP-dependent protease ATPase subunit HslU (442 aa).

Residues I18 and G60 to E65 contribute to the ATP site. The segment at P137–Q156 is disordered. ATP is bound by residues D255, E320, and R392.

Belongs to the ClpX chaperone family. HslU subfamily. A double ring-shaped homohexamer of HslV is capped on each side by a ring-shaped HslU homohexamer. The assembly of the HslU/HslV complex is dependent on binding of ATP.

Its subcellular location is the cytoplasm. Functionally, ATPase subunit of a proteasome-like degradation complex; this subunit has chaperone activity. The binding of ATP and its subsequent hydrolysis by HslU are essential for unfolding of protein substrates subsequently hydrolyzed by HslV. HslU recognizes the N-terminal part of its protein substrates and unfolds these before they are guided to HslV for hydrolysis. This Shewanella baltica (strain OS155 / ATCC BAA-1091) protein is ATP-dependent protease ATPase subunit HslU.